A 245-amino-acid polypeptide reads, in one-letter code: MADS-box transcription factor 55 (245 aa).

Residues 1-61 (MARERREIRR…GKLSQFASSN (61 aa)) enclose the MADS-box domain. In terms of domain architecture, K-box spans 109-199 (LQLEHSKCSS…RDQMPQVPTA (91 aa)). Residues 197–245 (PTAGLAVPDTENVLTEDGQSSESVMTALNSGSSQDNDDGSDISLKLGLP) are disordered. Residues 213–224 (DGQSSESVMTAL) show a composition bias toward polar residues.

Expressed in roots, shoots and developing panicles. Expressed in shoots.

The protein resides in the nucleus. In terms of biological role, transcription factor that acts as a negative regulator of brassinosteroid signaling. This chain is MADS-box transcription factor 55 (MADS55), found in Oryza sativa subsp. japonica (Rice).